Consider the following 114-residue polypeptide: Putative protein TfaS (114 aa).

The protein belongs to the tfa family.

The sequence is that of Putative protein TfaS (tfaS) from Escherichia coli (strain K12).